The chain runs to 342 residues: tRNA N6-adenosine threonylcarbamoyltransferase (342 aa).

Fe cation is bound by residues His-115 and His-119. Substrate is bound by residues 138 to 142, Asp-171, Gly-184, Asp-188, and Asn-276; that span reads IISGG. Asp-304 contacts Fe cation.

The protein belongs to the KAE1 / TsaD family. Fe(2+) is required as a cofactor.

It localises to the cytoplasm. It catalyses the reaction L-threonylcarbamoyladenylate + adenosine(37) in tRNA = N(6)-L-threonylcarbamoyladenosine(37) in tRNA + AMP + H(+). Required for the formation of a threonylcarbamoyl group on adenosine at position 37 (t(6)A37) in tRNAs that read codons beginning with adenine. Is involved in the transfer of the threonylcarbamoyl moiety of threonylcarbamoyl-AMP (TC-AMP) to the N6 group of A37, together with TsaE and TsaB. TsaD likely plays a direct catalytic role in this reaction. This chain is tRNA N6-adenosine threonylcarbamoyltransferase, found in Endomicrobium trichonymphae.